The primary structure comprises 255 residues: Ribonuclease HII (255 aa).

Residues Q72–E255 form the RNase H type-2 domain. D78, E79, and D170 together coordinate a divalent metal cation.

Belongs to the RNase HII family. Mn(2+) is required as a cofactor. The cofactor is Mg(2+).

The protein localises to the cytoplasm. The enzyme catalyses Endonucleolytic cleavage to 5'-phosphomonoester.. In terms of biological role, endonuclease that specifically degrades the RNA of RNA-DNA hybrids. In Bacillus licheniformis (strain ATCC 14580 / DSM 13 / JCM 2505 / CCUG 7422 / NBRC 12200 / NCIMB 9375 / NCTC 10341 / NRRL NRS-1264 / Gibson 46), this protein is Ribonuclease HII.